A 309-amino-acid polypeptide reads, in one-letter code: Lipoyl synthase (309 aa).

The [4Fe-4S] cluster site is built by Cys-43, Cys-48, Cys-54, Cys-70, Cys-74, Cys-77, and Ser-283. One can recognise a Radical SAM core domain in the interval 56-272; that stretch reads AVRKTATFMI…KEIAMQKGFS (217 aa).

Belongs to the radical SAM superfamily. Lipoyl synthase family. [4Fe-4S] cluster is required as a cofactor.

The protein localises to the cytoplasm. The enzyme catalyses [[Fe-S] cluster scaffold protein carrying a second [4Fe-4S](2+) cluster] + N(6)-octanoyl-L-lysyl-[protein] + 2 oxidized [2Fe-2S]-[ferredoxin] + 2 S-adenosyl-L-methionine + 4 H(+) = [[Fe-S] cluster scaffold protein] + N(6)-[(R)-dihydrolipoyl]-L-lysyl-[protein] + 4 Fe(3+) + 2 hydrogen sulfide + 2 5'-deoxyadenosine + 2 L-methionine + 2 reduced [2Fe-2S]-[ferredoxin]. The protein operates within protein modification; protein lipoylation via endogenous pathway; protein N(6)-(lipoyl)lysine from octanoyl-[acyl-carrier-protein]. Its function is as follows. Catalyzes the radical-mediated insertion of two sulfur atoms into the C-6 and C-8 positions of the octanoyl moiety bound to the lipoyl domains of lipoate-dependent enzymes, thereby converting the octanoylated domains into lipoylated derivatives. The chain is Lipoyl synthase from Shouchella clausii (strain KSM-K16) (Alkalihalobacillus clausii).